Consider the following 390-residue polypeptide: Succinate--CoA ligase [ADP-forming] subunit beta (390 aa).

The 240-residue stretch at 9–248 (KEILRRHKAN…ITEEDPLEVQ (240 aa)) folds into the ATP-grasp domain. Residues K50, 57–59 (GRG), E103, I106, and E111 each bind ATP. 2 residues coordinate Mg(2+): N203 and D217. Residues N268 and 325–327 (GIV) each bind substrate.

It belongs to the succinate/malate CoA ligase beta subunit family. Heterotetramer of two alpha and two beta subunits. Mg(2+) serves as cofactor.

It carries out the reaction succinate + ATP + CoA = succinyl-CoA + ADP + phosphate. It catalyses the reaction GTP + succinate + CoA = succinyl-CoA + GDP + phosphate. Its pathway is carbohydrate metabolism; tricarboxylic acid cycle; succinate from succinyl-CoA (ligase route): step 1/1. Functionally, succinyl-CoA synthetase functions in the citric acid cycle (TCA), coupling the hydrolysis of succinyl-CoA to the synthesis of either ATP or GTP and thus represents the only step of substrate-level phosphorylation in the TCA. The beta subunit provides nucleotide specificity of the enzyme and binds the substrate succinate, while the binding sites for coenzyme A and phosphate are found in the alpha subunit. The polypeptide is Succinate--CoA ligase [ADP-forming] subunit beta (Leptospira interrogans serogroup Icterohaemorrhagiae serovar copenhageni (strain Fiocruz L1-130)).